The following is a 549-amino-acid chain: Ribosomal protein S6 kinase-like 1 (549 aa).

The MIT domain occupies 87–115; it reads IHVDPNKERREAVKLKITKYLRRAEEIFN. The 395-residue stretch at 145 to 539 folds into the Protein kinase domain; that stretch reads SAVEQLRGCR…VSKLKSHPFF (395 aa). Residues 151–159 and Lys-177 each bind ATP; that span reads RGCRVVGVI. The interval 260 to 325 is disordered; the sequence is LTPARLPSGH…SDLPKAPGGH (66 aa). Asp-412 (proton acceptor) is an active-site residue.

The protein belongs to the protein kinase superfamily. Ser/Thr protein kinase family. S6 kinase subfamily.

It carries out the reaction L-seryl-[protein] + ATP = O-phospho-L-seryl-[protein] + ADP + H(+). It catalyses the reaction L-threonyl-[protein] + ATP = O-phospho-L-threonyl-[protein] + ADP + H(+). This chain is Ribosomal protein S6 kinase-like 1 (RPS6KL1), found in Pongo abelii (Sumatran orangutan).